A 1024-amino-acid polypeptide reads, in one-letter code: Error-prone DNA polymerase (1024 aa).

It belongs to the DNA polymerase type-C family. DnaE2 subfamily.

The protein resides in the cytoplasm. It catalyses the reaction DNA(n) + a 2'-deoxyribonucleoside 5'-triphosphate = DNA(n+1) + diphosphate. In terms of biological role, DNA polymerase involved in damage-induced mutagenesis and translesion synthesis (TLS). It is not the major replicative DNA polymerase. This chain is Error-prone DNA polymerase, found in Vibrio parahaemolyticus serotype O3:K6 (strain RIMD 2210633).